The primary structure comprises 567 residues: Septation ring formation regulator EzrA (567 aa).

Residues methionine 1 to glutamate 2 are Extracellular-facing. The chain crosses the membrane as a helical span at residues isoleucine 3–tyrosine 21. Over arginine 22 to glutamate 567 the chain is Cytoplasmic. Coiled coils occupy residues arginine 97–serine 188 and arginine 254–lysine 465.

The protein belongs to the EzrA family.

The protein resides in the cell membrane. Negative regulator of FtsZ ring formation; modulates the frequency and position of FtsZ ring formation. Inhibits FtsZ ring formation at polar sites. Interacts either with FtsZ or with one of its binding partners to promote depolymerization. In Geobacillus sp. (strain WCH70), this protein is Septation ring formation regulator EzrA.